Reading from the N-terminus, the 331-residue chain is Ketol-acid reductoisomerase (NADP(+)) (331 aa).

The region spanning 1-181 (MKMYYDADAD…GGTRAGVIET (181 aa)) is the KARI N-terminal Rossmann domain. NADP(+) contacts are provided by residues 24-27 (YGSQ), R47, S50, and 82-85 (DEKQ). H107 is a catalytic residue. Residue G133 participates in NADP(+) binding. The KARI C-terminal knotted domain maps to 182–327 (TFREETETDL…KKLRAMMPWL (146 aa)). Mg(2+) contacts are provided by D190, E194, E226, and E230. S251 contacts substrate.

This sequence belongs to the ketol-acid reductoisomerase family. The cofactor is Mg(2+).

It catalyses the reaction (2R)-2,3-dihydroxy-3-methylbutanoate + NADP(+) = (2S)-2-acetolactate + NADPH + H(+). The enzyme catalyses (2R,3R)-2,3-dihydroxy-3-methylpentanoate + NADP(+) = (S)-2-ethyl-2-hydroxy-3-oxobutanoate + NADPH + H(+). The protein operates within amino-acid biosynthesis; L-isoleucine biosynthesis; L-isoleucine from 2-oxobutanoate: step 2/4. It participates in amino-acid biosynthesis; L-valine biosynthesis; L-valine from pyruvate: step 2/4. Functionally, involved in the biosynthesis of branched-chain amino acids (BCAA). Catalyzes an alkyl-migration followed by a ketol-acid reduction of (S)-2-acetolactate (S2AL) to yield (R)-2,3-dihydroxy-isovalerate. In the isomerase reaction, S2AL is rearranged via a Mg-dependent methyl migration to produce 3-hydroxy-3-methyl-2-ketobutyrate (HMKB). In the reductase reaction, this 2-ketoacid undergoes a metal-dependent reduction by NADPH to yield (R)-2,3-dihydroxy-isovalerate. This Heliobacterium modesticaldum (strain ATCC 51547 / Ice1) protein is Ketol-acid reductoisomerase (NADP(+)).